Reading from the N-terminus, the 2209-residue chain is Kinetochore-associated protein 1 (2209 aa).

The residue at position 13 (threonine 13) is a Phosphothreonine; by TTK. The residue at position 15 (serine 15) is a Phosphoserine; by TTK. Threonine 1035 is modified (phosphothreonine). Serine 1045 bears the Phosphoserine mark.

As to quaternary structure, interacts with ZW10; the interaction is required for stable association with the kinetochore. Component of the RZZ complex composed of KNTC1/ROD, ZW10 and ZWILCH; in the complex interacts directly with ZWILCH. In terms of tissue distribution, high expression in testis.

It localises to the cytoplasm. The protein resides in the nucleus. It is found in the chromosome. Its subcellular location is the centromere. The protein localises to the kinetochore. It localises to the cytoskeleton. The protein resides in the spindle. Functionally, essential component of the mitotic checkpoint, which prevents cells from prematurely exiting mitosis. Required for the assembly of the dynein-dynactin and MAD1-MAD2 complexes onto kinetochores. Its function related to the spindle assembly machinery is proposed to depend on its association in the mitotic RZZ complex. This Homo sapiens (Human) protein is Kinetochore-associated protein 1 (KNTC1).